A 133-amino-acid chain; its full sequence is Sigma factor-binding protein Crl (133 aa).

An essential for activity region spans residues 99-122 (TLDDFYVKLTKFVKEDCQLDLQAS).

Belongs to the Crl family.

The protein localises to the cytoplasm. Its function is as follows. Binds to the sigma-S subunit of RNA polymerase, activating expression of sigma-S-regulated genes. Stimulates RNA polymerase holoenzyme formation and may bind to several other sigma factors, such as sigma-70 and sigma-32. This chain is Sigma factor-binding protein Crl, found in Photobacterium profundum (strain SS9).